The chain runs to 62 residues: UPF0434 protein R03186 (62 aa).

The protein belongs to the UPF0434 family.

The sequence is that of UPF0434 protein R03186 from Rhizobium meliloti (strain 1021) (Ensifer meliloti).